Here is a 429-residue protein sequence, read N- to C-terminus: Adenylosuccinate synthetase (429 aa).

Residues G12–K18 and G40–T42 contribute to the GTP site. D13 acts as the Proton acceptor in catalysis. Mg(2+) contacts are provided by D13 and G40. IMP-binding positions include D13–K16, N38–H41, T129, R143, Q223, T238, and R302. The active-site Proton donor is the H41. A substrate-binding site is contributed by V298–R304. Residues R304, K330–D332, and S412–S414 each bind GTP.

This sequence belongs to the adenylosuccinate synthetase family. In terms of assembly, homodimer. Mg(2+) is required as a cofactor.

Its subcellular location is the cytoplasm. The catalysed reaction is IMP + L-aspartate + GTP = N(6)-(1,2-dicarboxyethyl)-AMP + GDP + phosphate + 2 H(+). It functions in the pathway purine metabolism; AMP biosynthesis via de novo pathway; AMP from IMP: step 1/2. In terms of biological role, plays an important role in the de novo pathway of purine nucleotide biosynthesis. Catalyzes the first committed step in the biosynthesis of AMP from IMP. The chain is Adenylosuccinate synthetase from Bartonella henselae (strain ATCC 49882 / DSM 28221 / CCUG 30454 / Houston 1) (Rochalimaea henselae).